The primary structure comprises 293 residues: Pyridoxal 5'-phosphate synthase subunit PdxS (293 aa).

A D-ribose 5-phosphate-binding site is contributed by D23. K80 serves as the catalytic Schiff-base intermediate with D-ribose 5-phosphate. G152 contributes to the D-ribose 5-phosphate binding site. Residue R164 coordinates D-glyceraldehyde 3-phosphate. Residues G213 and 234–235 (GS) contribute to the D-ribose 5-phosphate site.

It belongs to the PdxS/SNZ family. In terms of assembly, in the presence of PdxT, forms a dodecamer of heterodimers.

The enzyme catalyses aldehydo-D-ribose 5-phosphate + D-glyceraldehyde 3-phosphate + L-glutamine = pyridoxal 5'-phosphate + L-glutamate + phosphate + 3 H2O + H(+). It participates in cofactor biosynthesis; pyridoxal 5'-phosphate biosynthesis. Its function is as follows. Catalyzes the formation of pyridoxal 5'-phosphate from ribose 5-phosphate (RBP), glyceraldehyde 3-phosphate (G3P) and ammonia. The ammonia is provided by the PdxT subunit. Can also use ribulose 5-phosphate and dihydroxyacetone phosphate as substrates, resulting from enzyme-catalyzed isomerization of RBP and G3P, respectively. The sequence is that of Pyridoxal 5'-phosphate synthase subunit PdxS from Chloroflexus aggregans (strain MD-66 / DSM 9485).